The sequence spans 1076 residues: Nickel and cobalt resistance protein CnrA (1076 aa).

A run of 12 helical transmembrane segments spans residues 14–34 (WLVLFLTAVVAVIGAWQLNLL), 366–386 (TVAKNLIEGALLVVAILFALL), 390–410 (RAATIAALVIPLSLLVSAIGM), 418–438 (NLMSLGALDFGLIIDGAVIIV), 475–495 (PTVYGQLVIFMVFLPCLTFQG), 502–522 (SPMVITLMLALASAFVLSLTF), 561–581 (PMPFIGAGIATVAVATVAFTF), 903–923 (RLAIIVPLCFILIAATLYMAI), 928–948 (LTATVLTAVPLALAGGVFALL), 959–979 (AVGFIAVSGVAVLNGLVLISA), 1003–1023 (RPVLMTALVASLGFVPMAIAT), and 1035–1055 (TVVIGGLVTATVLTLFVLPAL).

It belongs to the resistance-nodulation-cell division (RND) (TC 2.A.6) family.

It localises to the cell inner membrane. Its function is as follows. The products of the genes cnrA, cnrB, and cnrC are likely to form a membrane-bound protein complex catalyzing an energy-dependent efflux of Ni(2+) and Co(2+). The mechanism of action of the CnrCBA complex may be that of a proton/cation antiporter. The chain is Nickel and cobalt resistance protein CnrA (cnrA) from Cupriavidus metallidurans (strain ATCC 43123 / DSM 2839 / NBRC 102507 / CH34) (Ralstonia metallidurans).